Consider the following 237-residue polypeptide: Ribitol-5-phosphate cytidylyltransferase (237 aa).

CTP-binding positions include 7–10 (LAGG), 81–87 (GSDRNES), and Ser-112.

The protein belongs to the IspD/TarI cytidylyltransferase family. TarI subfamily.

The enzyme catalyses D-ribitol 5-phosphate + CTP + H(+) = CDP-L-ribitol + diphosphate. The protein operates within cell wall biogenesis; poly(ribitol phosphate) teichoic acid biosynthesis. In terms of biological role, catalyzes the transfer of the cytidylyl group of CTP to D-ribitol 5-phosphate. This chain is Ribitol-5-phosphate cytidylyltransferase, found in Bacillus spizizenii (strain ATCC 23059 / NRRL B-14472 / W23) (Bacillus subtilis subsp. spizizenii).